We begin with the raw amino-acid sequence, 617 residues long: Secretogranin-2 (617 aa).

The first 27 residues, 1 to 27 (MAEAKTHWLGAALSLIPLIFLISGAEA), serve as a signal peptide directing secretion. Residues 28-30 (ASF) constitute a propeptide that is removed on maturation. A disordered region spans residues 120-143 (QAENEPQSAPKENKPYALNSEKNF). A Sulfotyrosine modification is found at tyrosine 151. Serine 174 is subject to Phosphoserine. Positions 182-200 (TNEIVEEQYTPQSLATLES) are O-glycosylated at one site. Basic and acidic residues-rich tracts occupy residues 257–284 (IESQ…EMKR) and 293–302 (EDLRKESKDQ). A disordered region spans residues 257–302 (IESQTQEEVRDSKENIEKNEQINDEMKRSGQLGIQEEDLRKESKDQ). Serine 268 is subject to Phosphoserine. Residues serine 432, serine 532, serine 555, and serine 556 each carry the phosphoserine modification. The interval 552–583 (NQGSSQETDKLAPVSKRFPVGPPKNDDTPNRQ) is disordered.

It belongs to the chromogranin/secretogranin protein family. Interacts with Secretogranin III/SCG3. In terms of processing, O-glycosylated.

The protein localises to the secreted. In terms of biological role, neuroendocrine protein of the granin family that regulates the biogenesis of secretory granules. This chain is Secretogranin-2 (SCG2), found in Homo sapiens (Human).